Here is a 202-residue protein sequence, read N- to C-terminus: Superoxide dismutase [Mn] (202 aa).

Mn(2+) is bound by residues H27, H82, D164, and H168.

The protein belongs to the iron/manganese superoxide dismutase family. In terms of assembly, homodimer. It depends on Mn(2+) as a cofactor.

It carries out the reaction 2 superoxide + 2 H(+) = H2O2 + O2. Functionally, destroys superoxide anion radicals which are normally produced within the cells and which are toxic to biological systems. The polypeptide is Superoxide dismutase [Mn] (sodA) (Listeria ivanovii).